The primary structure comprises 474 residues: tRNA-2-methylthio-N(6)-dimethylallyladenosine synthase (474 aa).

The 118-residue stretch at 3–120 folds into the MTTase N-terminal domain; it reads KKLHIKTWGC…LPDMIEQVRR (118 aa). The [4Fe-4S] cluster site is built by Cys-12, Cys-49, Cys-83, Cys-157, Cys-161, and Cys-164. One can recognise a Radical SAM core domain in the interval 143 to 375; the sequence is RAEGPTAFVS…QDRITQQAMR (233 aa). Positions 378-441 constitute a TRAM domain; the sequence is RHMMGTVQRI…TNSLRGKFIR (64 aa).

It belongs to the methylthiotransferase family. MiaB subfamily. In terms of assembly, monomer. It depends on [4Fe-4S] cluster as a cofactor.

Its subcellular location is the cytoplasm. It carries out the reaction N(6)-dimethylallyladenosine(37) in tRNA + (sulfur carrier)-SH + AH2 + 2 S-adenosyl-L-methionine = 2-methylsulfanyl-N(6)-dimethylallyladenosine(37) in tRNA + (sulfur carrier)-H + 5'-deoxyadenosine + L-methionine + A + S-adenosyl-L-homocysteine + 2 H(+). Catalyzes the methylthiolation of N6-(dimethylallyl)adenosine (i(6)A), leading to the formation of 2-methylthio-N6-(dimethylallyl)adenosine (ms(2)i(6)A) at position 37 in tRNAs that read codons beginning with uridine. The polypeptide is tRNA-2-methylthio-N(6)-dimethylallyladenosine synthase (Shewanella sp. (strain MR-7)).